Reading from the N-terminus, the 169-residue chain is Mu-like prophage FluMu host-nuclease inhibitor protein gam (169 aa).

The protein to phage Mu protein gam.

Functionally, protects linear double-stranded DNA of Mu genome from exonuclease degradation. This chain is Mu-like prophage FluMu host-nuclease inhibitor protein gam, found in Haemophilus influenzae (strain ATCC 51907 / DSM 11121 / KW20 / Rd).